A 341-amino-acid chain; its full sequence is DNA-directed RNA polymerase subunit alpha (341 aa).

The tract at residues 1–233 (MVREEVAGST…DLFLPFLHAE (233 aa)) is alpha N-terminal domain (alpha-NTD). The tract at residues 269–341 (IPLNCIFIDQ…IDLLKNKLSF (73 aa)) is alpha C-terminal domain (alpha-CTD).

Belongs to the RNA polymerase alpha chain family. As to quaternary structure, in plastids the minimal PEP RNA polymerase catalytic core is composed of four subunits: alpha, beta, beta', and beta''. When a (nuclear-encoded) sigma factor is associated with the core the holoenzyme is formed, which can initiate transcription.

It is found in the plastid. It localises to the chloroplast. It catalyses the reaction RNA(n) + a ribonucleoside 5'-triphosphate = RNA(n+1) + diphosphate. In terms of biological role, DNA-dependent RNA polymerase catalyzes the transcription of DNA into RNA using the four ribonucleoside triphosphates as substrates. The polypeptide is DNA-directed RNA polymerase subunit alpha (Lolium perenne (Perennial ryegrass)).